The following is a 558-amino-acid chain: Glutamine--tRNA ligase (558 aa).

The 'HIGH' region motif lies at 36 to 46; sequence PEPNGYLHIGH. Residues 37–39 and 43–49 contribute to the ATP site; these read EPN and HIGHAKS. Residues Asp69 and Tyr214 each contribute to the L-glutamine site. Residues Thr233, 263–264, and 271–273 contribute to the ATP site; these read RL and LSK. Residues 270 to 274 carry the 'KMSKS' region motif; sequence LLSKR.

This sequence belongs to the class-I aminoacyl-tRNA synthetase family. Monomer.

Its subcellular location is the cytoplasm. It carries out the reaction tRNA(Gln) + L-glutamine + ATP = L-glutaminyl-tRNA(Gln) + AMP + diphosphate. The sequence is that of Glutamine--tRNA ligase from Bradyrhizobium diazoefficiens (strain JCM 10833 / BCRC 13528 / IAM 13628 / NBRC 14792 / USDA 110).